The chain runs to 821 residues: Ribonuclease R (821 aa).

The region spanning 267–593 is the RNB domain; that stretch reads RVDLRALPLV…LLHRAIKYLI (327 aa). Positions 652–733 constitute an S1 motif domain; it reads GEELEGVVAN…DDRQIDFELV (82 aa). The segment at 739 to 821 is disordered; sequence LRGQGKTAKK…KSGKVRDKTK (83 aa). Composition is skewed to basic and acidic residues over residues 748 to 764 and 774 to 794; these read KRADEARAKAQGKKEAA and TKSELKPQVEATRRPDSEGRS. The segment covering 795-814 has biased composition (basic residues); it reads KPKKTKAPKKRKDQARKKSG.

This sequence belongs to the RNR ribonuclease family. RNase R subfamily.

It is found in the cytoplasm. The enzyme catalyses Exonucleolytic cleavage in the 3'- to 5'-direction to yield nucleoside 5'-phosphates.. Its function is as follows. 3'-5' exoribonuclease that releases 5'-nucleoside monophosphates and is involved in maturation of structured RNAs. This chain is Ribonuclease R, found in Vibrio cholerae serotype O1 (strain ATCC 39315 / El Tor Inaba N16961).